We begin with the raw amino-acid sequence, 235 residues long: Large ribosomal subunit protein uL1 (235 aa).

It belongs to the universal ribosomal protein uL1 family. As to quaternary structure, part of the 50S ribosomal subunit.

Functionally, binds directly to 23S rRNA. The L1 stalk is quite mobile in the ribosome, and is involved in E site tRNA release. Its function is as follows. Protein L1 is also a translational repressor protein, it controls the translation of the L11 operon by binding to its mRNA. The chain is Large ribosomal subunit protein uL1 from Prochlorococcus marinus (strain MIT 9313).